The chain runs to 636 residues: Putative lipase ATG15 (636 aa).

Topologically, residues 1 to 19 are cytoplasmic; that stretch reads MYKYGTVVDPAMTTNRRSR. A helical; Signal-anchor for type II membrane protein membrane pass occupies residues 20–42; that stretch reads LSGFRCASTARVTATLLLSFLAF. Over 43–636 the chain is Lumenal; it reads SPSSASSDFG…DDLEFATDEM (594 aa). 5 N-linked (GlcNAc...) asparagine glycosylation sites follow: N211, N233, N291, N315, and N477. Positions 478-500 are disordered; that stretch reads GTETTTTSSPSTTSTTRTRTRTS. Positions 479-500 are enriched in low complexity; the sequence is TETTTTSSPSTTSTTRTRTRTS.

It belongs to the AB hydrolase superfamily. Lipase family. Binds to both phosphatidylinositol (PI) and phosphatidylinositol 3,5-bisphosphate (PIP2).

It localises to the endosome. Its subcellular location is the multivesicular body membrane. The protein localises to the prevacuolar compartment membrane. The catalysed reaction is a triacylglycerol + H2O = a diacylglycerol + a fatty acid + H(+). Lipase which is essential for lysis of subvacuolar cytoplasm to vacuole targeted bodies and intravacuolar autophagic bodies. Involved in the lysis of intravacuolar multivesicular body (MVB) vesicles. The intravacuolar membrane disintegration by ATG15 is critical to life span extension. Autophagy is required for proper vegetative growth, asexual/sexual reproduction, and full virulence. Autophagy is particularly involved in the biosynthesis of deoxynivalenol (DON), an important virulence determinant. The chain is Putative lipase ATG15 from Gibberella zeae (strain ATCC MYA-4620 / CBS 123657 / FGSC 9075 / NRRL 31084 / PH-1) (Wheat head blight fungus).